The chain runs to 78 residues: UPF0349 protein BPUM_2879 (78 aa).

The protein belongs to the UPF0349 family.

The sequence is that of UPF0349 protein BPUM_2879 from Bacillus pumilus (strain SAFR-032).